A 399-amino-acid chain; its full sequence is Probable WRKY transcription factor 48 (399 aa).

Composition is skewed to basic and acidic residues over residues 1 to 11 (MEKKKEEDHHH) and 19 to 38 (KEIK…EQKQ). Disordered stretches follow at residues 1 to 57 (MEKK…TSSD) and 138 to 202 (AESS…KNQK). Over residues 143–161 (VVNTTPTSPNSTSVSSSSN) the composition is skewed to low complexity. A compositionally biased stretch (polar residues) spans 162-171 (EAANDNNSGK). A compositionally biased stretch (low complexity) spans 184 to 193 (QQEQKGTKPQ). Residues 215–280 (SDIDNLDDGY…YEGQHTHPFP (66 aa)) constitute a DNA-binding region (WRKY). Residues 361–399 (QASTSTSSSIRDHGLLQDILPSQIRSDTINTQTNEENKK) form a disordered region. Residues 383–399 (QIRSDTINTQTNEENKK) show a composition bias toward polar residues.

It is found in the nucleus. In terms of biological role, transcription factor. Interacts specifically with the W box (5'-(T)TGAC[CT]-3'), a frequently occurring elicitor-responsive cis-acting element. The chain is Probable WRKY transcription factor 48 (WRKY48) from Arabidopsis thaliana (Mouse-ear cress).